A 64-amino-acid chain; its full sequence is Large ribosomal subunit protein bL28 (64 aa).

It belongs to the bacterial ribosomal protein bL28 family.

This Bifidobacterium longum (strain NCC 2705) protein is Large ribosomal subunit protein bL28.